Consider the following 182-residue polypeptide: Ribulose bisphosphate carboxylase small subunit, chloroplastic 3 (182 aa).

The N-terminal 41 residues, 1–41, are a transit peptide targeting the chloroplast; sequence MASIMMNKSVVLSKECAKPLASPKVTLNKRGFATTIATKNR.

Belongs to the RuBisCO small chain family. As to quaternary structure, heterohexadecamer of 8 large and 8 small subunits.

The protein localises to the plastid. It is found in the chloroplast. In terms of biological role, ruBisCO catalyzes two reactions: the carboxylation of D-ribulose 1,5-bisphosphate, the primary event in carbon dioxide fixation, as well as the oxidative fragmentation of the pentose substrate. Both reactions occur simultaneously and in competition at the same active site. Although the small subunit is not catalytic it is essential for maximal activity. This chain is Ribulose bisphosphate carboxylase small subunit, chloroplastic 3, found in Acetabularia acetabulum (Mermaid's wine glass).